We begin with the raw amino-acid sequence, 296 residues long: Farnesyl diphosphate synthase (296 aa).

3 residues coordinate isopentenyl diphosphate: lysine 46, arginine 49, and histidine 78. Mg(2+) is bound by residues aspartate 85 and aspartate 91. Arginine 96 contributes to the (2E)-geranyl diphosphate binding site. Arginine 97 provides a ligand contact to isopentenyl diphosphate. Residues lysine 182, threonine 183, glutamine 220, and lysine 237 each contribute to the (2E)-geranyl diphosphate site.

The protein belongs to the FPP/GGPP synthase family. Mg(2+) serves as cofactor.

The protein localises to the cytoplasm. The enzyme catalyses isopentenyl diphosphate + (2E)-geranyl diphosphate = (2E,6E)-farnesyl diphosphate + diphosphate. This is Farnesyl diphosphate synthase (ispA) from Bacillus subtilis (strain 168).